The sequence spans 433 residues: Myricetin 3-O-glucosyl 1,2-rhamnoside 6'-O-caffeoyltransferase AT2 (433 aa).

Catalysis depends on proton acceptor residues histidine 157 and aspartate 375.

This sequence belongs to the plant acyltransferase family. Expressed in young cromes.

The catalysed reaction is myricetin 3-O-[beta-D-glucosyl-(1-&gt;2)-alpha-L-rhamnoside] + (E)-caffeoyl-CoA = myricetin 3-O-[(6-O-(E)-caffeoyl-beta-D-glucosyl)-(1-&gt;2)-alpha-L-rhamnoside] + CoA. It functions in the pathway flavonoid metabolism. Caffeoyltransferase involved in montbretin A (MbA) biosynthesis. Catalyzes the caffeoylation of myricetin 3-O-beta-D-glucosyl 1,2-alpha-L-rhamnoside (MRG) to produce myricetin 3-O-(6'-O-caffeoyl)-beta-D-glucosyl 1,2-alpha-L-rhamnoside (mini-MbA), a precursor of MbA. Mini-MbA and MbA are potent inhibitors of human pancreatic alpha-amylase and are being developed as drug candidates to treat type-2 diabetes. In vitro, is able to catalyze the caffeoylation of quercetin 3-O-sophoroside (QGG), although QGG may not be a physiological substrate in vivo. In vitro, can use coumaryl-CoA, feruloyl-CoA and acetyl-CoA, although these three acyl donors may not be physiological in vivo. In Crocosmia x crocosmiiflora (Montbretia), this protein is Myricetin 3-O-glucosyl 1,2-rhamnoside 6'-O-caffeoyltransferase AT2.